Consider the following 963-residue polypeptide: Protein suppressor of white apricot (963 aa).

An SURP motif 1 repeat occupies 234–276; the sequence is IIEKTARFIATQGAQMEILIKAKQANNTQFDFLTQGGHLQPYY. Disordered stretches follow at residues 290–322 and 360–430; these read PAPQTPLDQQNTDKEAPSADDHSEEVAGGRRNP and EDES…EPPQ. Over residues 300 to 317 the composition is skewed to basic and acidic residues; sequence NTDKEAPSADDHSEEVAG. Positions 364–375 are enriched in polar residues; sequence SNPGNSQHSGGT. Residues 407–418 are compositionally biased toward basic and acidic residues; that stretch reads THEEESSNREQQ. Residues Ser438, Ser447, Ser448, and Ser450 each carry the phosphoserine modification. The segment at 445–470 is disordered; it reads NYSSESEEEEDQVQPEKEEEKKPEPV. Basic and acidic residues predominate over residues 458–468; sequence QPEKEEEKKPE. The stretch at 483–523 is one SURP motif 2 repeat; sequence IIDKTATYVIKNGRQFEETLRTKSVDRFSFLLPANEYYPYY. Disordered regions lie at residues 593–613, 634–662, and 716–963; these read PQEASDEETSSNAAGVEHVRP, TAGQKGNITASPSCSSPQKEQRQAEERVK, and PPES…SSSP. The segment covering 637 to 651 has biased composition (polar residues); that stretch reads QKGNITASPSCSSPQ. At Ser649 the chain carries Phosphoserine. Over residues 652 to 662 the composition is skewed to basic and acidic residues; it reads KEQRQAEERVK. Over residues 718–727 the composition is skewed to low complexity; that stretch reads ESAAGAATAD. Positions 768–778 are enriched in acidic residues; sequence DEEDDDEEDGG. Positions 787-796 are enriched in polar residues; sequence NDDSTNTFTS. Residues 799-809 are compositionally biased toward pro residues; the sequence is VLPPTAAPPPA. Residues 820–830 show a composition bias toward low complexity; it reads QLVATTSTRSS. A compositionally biased stretch (basic residues) spans 831–847; the sequence is SSRHLKTHRRSRSRSKN. Over residues 848 to 858 the composition is skewed to low complexity; the sequence is VRSSDSSPSSR. Composition is skewed to basic residues over residues 861–870 and 882–913; these read SRRRRQKSSR and KSQHSSTQRKKTPKKRRRSKSRSRSKSIRRSR. Phosphoserine is present on residues Ser912, Ser914, and Ser916. Over residues 934-944 the composition is skewed to basic and acidic residues; sequence AEQRRQQDRRR. Basic residues predominate over residues 945-963; the sequence is TPTKKSHKRHKRRRRSSSP.

The protein resides in the nucleus speckle. Functionally, regulator of pre-mRNA splicing (and, possibly, of other RNA processing events). Regulates its own expression at the level of RNA processing. In Drosophila melanogaster (Fruit fly), this protein is Protein suppressor of white apricot (su(w[a])).